We begin with the raw amino-acid sequence, 211 residues long: tRNA (guanine-N(7)-)-methyltransferase (211 aa).

Glu-43, Asp-68, Asn-95, and Asn-117 together coordinate S-adenosyl-L-methionine. Residues Lys-121, Asp-153, and 190 to 193 contribute to the substrate site; that span reads TEYE.

This sequence belongs to the class I-like SAM-binding methyltransferase superfamily. TrmB family.

The enzyme catalyses guanosine(46) in tRNA + S-adenosyl-L-methionine = N(7)-methylguanosine(46) in tRNA + S-adenosyl-L-homocysteine. It functions in the pathway tRNA modification; N(7)-methylguanine-tRNA biosynthesis. Functionally, catalyzes the formation of N(7)-methylguanine at position 46 (m7G46) in tRNA. The chain is tRNA (guanine-N(7)-)-methyltransferase from Clostridium kluyveri (strain ATCC 8527 / DSM 555 / NBRC 12016 / NCIMB 10680 / K1).